The chain runs to 227 residues: Cytidylate kinase (227 aa).

12–20 (GPSGAGKGT) lines the ATP pocket.

This sequence belongs to the cytidylate kinase family. Type 1 subfamily.

It is found in the cytoplasm. The catalysed reaction is CMP + ATP = CDP + ADP. The enzyme catalyses dCMP + ATP = dCDP + ADP. The polypeptide is Cytidylate kinase (Shigella boydii serotype 4 (strain Sb227)).